A 315-amino-acid polypeptide reads, in one-letter code: Ribose-phosphate pyrophosphokinase (315 aa).

ATP is bound by residues 41–43 (DGE) and 100–101 (RQ). Residues H134 and D173 each contribute to the Mg(2+) site. K196 is a catalytic residue. D-ribose 5-phosphate is bound by residues R198, D222, and 226–230 (DTAGT).

The protein belongs to the ribose-phosphate pyrophosphokinase family. Class I subfamily. In terms of assembly, homohexamer. It depends on Mg(2+) as a cofactor.

Its subcellular location is the cytoplasm. The enzyme catalyses D-ribose 5-phosphate + ATP = 5-phospho-alpha-D-ribose 1-diphosphate + AMP + H(+). It participates in metabolic intermediate biosynthesis; 5-phospho-alpha-D-ribose 1-diphosphate biosynthesis; 5-phospho-alpha-D-ribose 1-diphosphate from D-ribose 5-phosphate (route I): step 1/1. In terms of biological role, involved in the biosynthesis of the central metabolite phospho-alpha-D-ribosyl-1-pyrophosphate (PRPP) via the transfer of pyrophosphoryl group from ATP to 1-hydroxyl of ribose-5-phosphate (Rib-5-P). In Bacillus caldolyticus, this protein is Ribose-phosphate pyrophosphokinase.